A 1023-amino-acid polypeptide reads, in one-letter code: Rho GTPase-activating protein 11A (1023 aa).

The 191-residue stretch at 49–239 (VPFNALPHSA…TLIDYASDIG (191 aa)) folds into the Rho-GAP domain. A Phosphoserine modification is found at Ser285. Thr306 carries the phosphothreonine modification. Phosphoserine occurs at positions 316 and 318. A Phosphothreonine modification is found at Thr323. 3 positions are modified to phosphoserine: Ser339, Ser340, and Ser484. Thr508 bears the Phosphothreonine mark. The interval 567 to 589 (TPSNLNNKHNSNITSSPLSGDEN) is disordered. A phosphoserine mark is found at Ser582, Ser585, Ser638, and Ser675. A disordered region spans residues 714–734 (KQEFSSDEEIKKQQSPKDKLN). The segment covering 721–734 (EEIKKQQSPKDKLN) has biased composition (basic and acidic residues). Phosphoserine is present on Ser847. Thr866 carries the post-translational modification Phosphothreonine. Ser868 bears the Phosphoserine mark. Positions 999-1023 (AWYKGSPKHPIGKTQLLPTSKPVDL) are disordered.

The protein resides in the nucleus. In terms of biological role, GTPase activator for the Rho-type GTPases by converting them to an inactive GDP-bound state. The sequence is that of Rho GTPase-activating protein 11A from Homo sapiens (Human).